Consider the following 143-residue polypeptide: MSLTEKDKAAVIAMWGKIHKSADAIGADALGRMLVVYPQTKTYFSHWSDLSPNSAPVKTHGKNVMSGVALAVSKIDDMTKGLMALSEQHAFQLRVDPANFKILSHCILVVIASMFPKDFTPEAHVSMDKFFCGLSLALAEKYR.

At Ser2 the chain carries N-acetylserine. The Globin domain occupies 2 to 143 (SLTEKDKAAV…LSLALAEKYR (142 aa)). His60 contributes to the O2 binding site. A heme b-binding site is contributed by His89.

This sequence belongs to the globin family. In terms of assembly, hb2 is a heterotetramer of two alpha-2 chains and two beta-1 chains; Hb3 is a heterotetramer of two alpha-2 chains and two beta-2 chains. As to expression, red blood cells.

Its function is as follows. Involved in oxygen transport from gills to the various peripheral tissues. This Anarhichas minor (Arctic spotted wolffish) protein is Hemoglobin subunit alpha-2 (hba2).